A 227-amino-acid polypeptide reads, in one-letter code: PKHD-type hydroxylase Reut_B4660 (227 aa).

In terms of domain architecture, Fe2OG dioxygenase spans 78-178 (KVFPPLFNRY…RVSSFFWIQS (101 aa)). Fe cation is bound by residues histidine 96, aspartate 98, and histidine 159. Position 169 (arginine 169) interacts with 2-oxoglutarate.

It depends on Fe(2+) as a cofactor. The cofactor is L-ascorbate.

The chain is PKHD-type hydroxylase Reut_B4660 from Cupriavidus pinatubonensis (strain JMP 134 / LMG 1197) (Cupriavidus necator (strain JMP 134)).